The chain runs to 236 residues: Probable glutathione S-transferase GSTU6 (236 aa).

One can recognise a GST N-terminal domain in the interval 5 to 84 (GELKLLGVWS…YIDEVWPGGA (80 aa)). Glutathione is bound by residues Ser-15, Lys-42, Val-56, and 68 to 69 (ES). The GST C-terminal domain occupies 94-228 (DPYERAVARF…KLLEFRQTLL (135 aa)).

This sequence belongs to the GST superfamily. Tau family. Expressed in seedling shoots and roots.

It catalyses the reaction RX + glutathione = an S-substituted glutathione + a halide anion + H(+). Conjugation of reduced glutathione to a wide number of exogenous and endogenous hydrophobic electrophiles. The protein is Probable glutathione S-transferase GSTU6 (GSTU6) of Oryza sativa subsp. japonica (Rice).